The sequence spans 227 residues: Uracil-DNA glycosylase (227 aa).

Aspartate 68 (proton acceptor) is an active-site residue.

This sequence belongs to the uracil-DNA glycosylase (UDG) superfamily. UNG family.

It localises to the cytoplasm. It carries out the reaction Hydrolyzes single-stranded DNA or mismatched double-stranded DNA and polynucleotides, releasing free uracil.. Its function is as follows. Excises uracil residues from the DNA which can arise as a result of misincorporation of dUMP residues by DNA polymerase or due to deamination of cytosine. This Mycobacterium ulcerans (strain Agy99) protein is Uracil-DNA glycosylase.